The following is a 345-amino-acid chain: Anthranilate phosphoribosyltransferase (345 aa).

5-phospho-alpha-D-ribose 1-diphosphate-binding positions include G86, 89 to 90 (GD), T94, 96 to 99 (NIST), 114 to 122 (KHGGRGVSS), and S126. G86 lines the anthranilate pocket. S98 serves as a coordination point for Mg(2+). R172 contacts anthranilate. Mg(2+) is bound by residues D231 and E232.

It belongs to the anthranilate phosphoribosyltransferase family. In terms of assembly, homodimer. Mg(2+) serves as cofactor.

It carries out the reaction N-(5-phospho-beta-D-ribosyl)anthranilate + diphosphate = 5-phospho-alpha-D-ribose 1-diphosphate + anthranilate. It functions in the pathway amino-acid biosynthesis; L-tryptophan biosynthesis; L-tryptophan from chorismate: step 2/5. Catalyzes the transfer of the phosphoribosyl group of 5-phosphorylribose-1-pyrophosphate (PRPP) to anthranilate to yield N-(5'-phosphoribosyl)-anthranilate (PRA). This chain is Anthranilate phosphoribosyltransferase, found in Ralstonia pickettii (strain 12J).